A 298-amino-acid polypeptide reads, in one-letter code: Quinolinate synthase (298 aa).

Residues His19 and Ser36 each coordinate iminosuccinate. Cys81 serves as a coordination point for [4Fe-4S] cluster. Residues 107 to 109 and Ser124 contribute to the iminosuccinate site; that span reads YVN. Cys168 provides a ligand contact to [4Fe-4S] cluster. Residues 193–195 and Thr210 each bind iminosuccinate; that span reads HPE. Cys254 contacts [4Fe-4S] cluster.

The protein belongs to the quinolinate synthase family. Type 2 subfamily. [4Fe-4S] cluster serves as cofactor.

It localises to the cytoplasm. The enzyme catalyses iminosuccinate + dihydroxyacetone phosphate = quinolinate + phosphate + 2 H2O + H(+). It functions in the pathway cofactor biosynthesis; NAD(+) biosynthesis; quinolinate from iminoaspartate: step 1/1. Its function is as follows. Catalyzes the condensation of iminoaspartate with dihydroxyacetone phosphate to form quinolinate. The protein is Quinolinate synthase of Thermotoga sp. (strain RQ2).